We begin with the raw amino-acid sequence, 441 residues long: Bacteria-responsive protein 1 (441 aa).

The first 18 residues, 1–18, serve as a signal peptide directing secretion; sequence MWFFKVGALLFLAALVSA. N20 carries N-linked (GlcNAc...) asparagine glycosylation. Residues 25 to 441 enclose the GH18 domain; sequence PKVLCYYDGQ…PILRAAKYRL (417 aa). C29 and C56 form a disulfide bridge. N225 carries an N-linked (GlcNAc...) asparagine glycan.

The protein belongs to the glycosyl hydrolase 18 family. IDGF subfamily. As to expression, salivary gland (at protein level).

Its subcellular location is the secreted. In terms of biological role, promotes recruitment of host neutrophils at the bite site. Induces expression of IL1B and IL6 in the skin of the host. (Microbial infection) Enhances Zika virus replication and exacerbates disease pathogenesis in the host. The sequence is that of Bacteria-responsive protein 1 from Aedes aegypti (Yellowfever mosquito).